We begin with the raw amino-acid sequence, 388 residues long: Protein-glutamate methylesterase/protein-glutamine glutaminase 4 (388 aa).

Positions 4-121 constitute a Response regulatory domain; that stretch reads KVLVVDDSGF…SGDASKIKRL (118 aa). Asp55 carries the post-translational modification 4-aspartylphosphate. The disordered stretch occupies residues 137–196; the sequence is SGASAPASVPQPAKPAAPIPVREPPKPAAPVTRPAEPRAKAPPAKPEPKPEVKAAKSRRT. Pro residues predominate over residues 148–164; that stretch reads PAKPAAPIPVREPPKPA. The CheB-type methylesterase domain maps to 197–388; the sequence is PRQDYKVVLI…FAPRLIDGVG (192 aa). Residues Ser209, His236, and Asp332 contribute to the active site.

Belongs to the CheB family. Phosphorylated by CheA. Phosphorylation of the N-terminal regulatory domain activates the methylesterase activity.

Its subcellular location is the cytoplasm. It carries out the reaction [protein]-L-glutamate 5-O-methyl ester + H2O = L-glutamyl-[protein] + methanol + H(+). The catalysed reaction is L-glutaminyl-[protein] + H2O = L-glutamyl-[protein] + NH4(+). In terms of biological role, involved in chemotaxis. Part of a chemotaxis signal transduction system that modulates chemotaxis in response to various stimuli. Catalyzes the demethylation of specific methylglutamate residues introduced into the chemoreceptors (methyl-accepting chemotaxis proteins or MCP) by CheR. Also mediates the irreversible deamidation of specific glutamine residues to glutamic acid. In Hahella chejuensis (strain KCTC 2396), this protein is Protein-glutamate methylesterase/protein-glutamine glutaminase 4.